A 170-amino-acid chain; its full sequence is Cathelicidin antimicrobial peptide (170 aa).

A signal peptide spans 1 to 30 (MKTQRDSPSLGRWSLVLLLLGLVMPLAIVA). The propeptide at 31 to 131 (QVLSYQEAVL…DISCDKDNRR (101 aa)) is cathelin-like domain (CLD). Intrachain disulfides connect C86–C97 and C108–C125. An active core region spans residues 150-162 (FKRIVQRIKDFLQ).

It belongs to the cathelicidin family. Monomer, homodimer or homotrimer (in vitro). Oligomerizes as tetra- or hexamer in solution (in vitro). Post-translationally, proteolytically cleaved by proteinase PRTN3 into antibacterial peptide LL-37. Proteolytically cleaved by cathepsin CTSG and neutrophil elastase ELANE. Resistant to proteolytic degradation in solution, and when bound to both zwitterionic (mimicking mammalian membranes) and negatively charged membranes (mimicking bacterial membranes). In terms of processing, after secretion onto the skin surface, the CAMP gene product is processed by a serine protease-dependent mechanism into multiple novel antimicrobial peptides distinct from and shorter than cathelicidin LL-37. These peptides show enhanced antimicrobial action, acquiring the ability to kill skin pathogens such as S.aureus, E.coli and C.albicans. These peptides have lost the ability to stimulate CXCL8/IL8 release from keratinocytes. The peptides act synergistically, killing bacteria at lower concentrations when present together, and maintain activity at increased salt condition.

Its subcellular location is the secreted. The protein localises to the vesicle. Its function is as follows. Antimicrobial protein that is an integral component of the innate immune system. Binds to bacterial lipopolysaccharides (LPS). Acts via neutrophil N-formyl peptide receptors to enhance the release of CXCL2. Postsecretory processing generates multiple cathelicidin antimicrobial peptides with various lengths which act as a topical antimicrobial defense in sweat on skin. The unprocessed precursor form, cathelicidin antimicrobial peptide, inhibits the growth of Gram-negative E.coli and E.aerogenes with efficiencies comparable to that of the mature peptide LL-37 (in vitro). In terms of biological role, antimicrobial peptide that is an integral component of the innate immune system. Binds to bacterial lipopolysaccharides (LPS). Causes membrane permeabilization by forming transmembrane pores (in vitro). Causes lysis of E.coli. Exhibits antimicrobial activity against Gram-negative bacteria such as P.aeruginosa, S.typhimurium, E.aerogenes, E.coli and P.syringae, Gram-positive bacteria such as L.monocytogenes, S.epidermidis, S.pyogenes and S.aureus, as well as vancomycin-resistant enterococci (in vitro). Exhibits antimicrobial activity against methicillin-resistant S.aureus, P.mirabilis, and C.albicans in low-salt media, but not in media containing 100 mM NaCl (in vitro). Forms chiral supramolecular assemblies with quinolone signal (PQS) molecules of P.aeruginosa, which may lead to interference of bacterial quorum signaling and perturbance of bacterial biofilm formation. May form supramolecular fiber-like assemblies on bacterial membranes. Induces cytokine and chemokine producation as well as TNF/TNFA and CSF2/GMCSF production in normal human keratinocytes. Exhibits hemolytic activity against red blood cells. Exhibits antimicrobial activity against E.coli and B.megaterium (in vitro). This is Cathelicidin antimicrobial peptide from Nomascus concolor (Black crested gibbon).